We begin with the raw amino-acid sequence, 401 residues long: DNA replication and repair protein RecF (401 aa).

Position 30-37 (30-37 (GYNGIGKT)) interacts with ATP.

This sequence belongs to the RecF family.

It localises to the cytoplasm. The RecF protein is involved in DNA metabolism; it is required for DNA replication and normal SOS inducibility. RecF binds preferentially to single-stranded, linear DNA. It also seems to bind ATP. The polypeptide is DNA replication and repair protein RecF (Arthrobacter sp. (strain FB24)).